We begin with the raw amino-acid sequence, 571 residues long: Proline--tRNA ligase (571 aa).

Belongs to the class-II aminoacyl-tRNA synthetase family. ProS type 1 subfamily. In terms of assembly, homodimer.

The protein resides in the cytoplasm. It catalyses the reaction tRNA(Pro) + L-proline + ATP = L-prolyl-tRNA(Pro) + AMP + diphosphate. Catalyzes the attachment of proline to tRNA(Pro) in a two-step reaction: proline is first activated by ATP to form Pro-AMP and then transferred to the acceptor end of tRNA(Pro). As ProRS can inadvertently accommodate and process non-cognate amino acids such as alanine and cysteine, to avoid such errors it has two additional distinct editing activities against alanine. One activity is designated as 'pretransfer' editing and involves the tRNA(Pro)-independent hydrolysis of activated Ala-AMP. The other activity is designated 'posttransfer' editing and involves deacylation of mischarged Ala-tRNA(Pro). The misacylated Cys-tRNA(Pro) is not edited by ProRS. The protein is Proline--tRNA ligase of Pseudoalteromonas atlantica (strain T6c / ATCC BAA-1087).